The sequence spans 242 residues: Small ribosomal subunit protein uS2 (242 aa).

It belongs to the universal ribosomal protein uS2 family.

The chain is Small ribosomal subunit protein uS2 from Shewanella amazonensis (strain ATCC BAA-1098 / SB2B).